Here is a 72-residue protein sequence, read N- to C-terminus: Translation initiation factor IF-1 (72 aa).

In terms of domain architecture, S1-like spans 1–72; it reads MAKDDVIEIE…TKGRITYRFK (72 aa).

The protein belongs to the IF-1 family. Component of the 30S ribosomal translation pre-initiation complex which assembles on the 30S ribosome in the order IF-2 and IF-3, IF-1 and N-formylmethionyl-tRNA(fMet); mRNA recruitment can occur at any time during PIC assembly.

It is found in the cytoplasm. In terms of biological role, one of the essential components for the initiation of protein synthesis. Stabilizes the binding of IF-2 and IF-3 on the 30S subunit to which N-formylmethionyl-tRNA(fMet) subsequently binds. Helps modulate mRNA selection, yielding the 30S pre-initiation complex (PIC). Upon addition of the 50S ribosomal subunit IF-1, IF-2 and IF-3 are released leaving the mature 70S translation initiation complex. The protein is Translation initiation factor IF-1 of Latilactobacillus sakei subsp. sakei (strain 23K) (Lactobacillus sakei subsp. sakei).